The sequence spans 375 residues: Peptidyl-prolyl cis-trans isomerase D (375 aa).

Residues 7–169 (YFDITIANEP…QAVTISSAGV (163 aa)) enclose the PPIase cyclophilin-type domain. TPR repeat units follow at residues 217–250 (AGKLKEVGTKEFKAGNFAVALDKYQKALRYLDVH), 270–307 (LPLLTNAALCALKLPASPNTSSLVVSLTSRALTLPNLS), and 312–345 (GKALYRRAQAYVLKKDDEAAEKDLKGALECVPGD).

It belongs to the cyclophilin-type PPIase family. PPIase D subfamily.

The protein localises to the cytoplasm. It carries out the reaction [protein]-peptidylproline (omega=180) = [protein]-peptidylproline (omega=0). In terms of biological role, PPIases accelerate the folding of proteins. It catalyzes the cis-trans isomerization of proline imidic peptide bonds in oligopeptides. The sequence is that of Peptidyl-prolyl cis-trans isomerase D (CPR6) from Cryptococcus neoformans var. neoformans serotype D (strain JEC21 / ATCC MYA-565) (Filobasidiella neoformans).